The chain runs to 1072 residues: MLGDGNEGMSTIPGFNQIQFEGFCRFIDQGLTEELIKFPKIEDTDQEIEFQLFVETYQLVEPLIKERDAVYESLTYSSELYVSAGLIWKTSRDMQEQTLFIGNIPLMNSLGTSIVNGIYRIVINQILQSPGIYYRSELDHNGISVYTGTIISDWGGRLELEIDRKARIWARVSRKQKISILVLSSAMGSNLREILENVCYPEIFLSFLNDKEKKKIGSKENAILEFYQQFACVGGDPVFSESLCKELQKKFFQQRCELGRIGRRNMNRRLNLDIPQNNTFLLPRDILAAADHLIGMKFGMGTLDDMNHLKNKRIRSVADLLQDQFGLALVRLENVVKGTICGAIRHKLIPTPQNLVTSTPLTTTYESFFGLHPLSQVLDRTNPLTQIVHGRKLSYLGPGGLTGRTASFRIRDIHPSHYGRICPIDTSEGINVGLIGSLAIHARIGQGGSLESPFYEISERSKSKKVRMLYLSPSRDEYYMIAAGNSLALNQRIQEEQVVPARYRQEFLTIAWEQVNLRSIFPFQYFSIGASLIPFIEHNDANRALMSSNMQRQAVPLSRSEKCIVGTGLERQAALDSGVTAIAEHEGKIIYTNTDKIILLGNGDTLSIPLVMYQRSNKNTCMHQKPQVPRGKCIKKGQILADGAATVGGELALGKNVLVAYLPWEGYNFEDAVLISERLVYEDIYTSFHIRKYEIQTHVTSQGPERITNEIPHLEAHLLRNLDKNGIVMLGSWVEAGDVLVGKLTPQTAKESSYAPEDRLLRAILGIQVSTSKETCLKLPIGGRGRVIDVRWIQKKGGSNYNPETICVYILQKREIKVGDKVAGRHGNKGIISKILPRQDMPYLQDGRPVDMVFNPLGVPSRMNVGQIFECSLGLAGDLLDRHYRIAPFDERYEQEASRKLVFSELYEASQQTANPWVFEPEYPGKSRIFDGRTGDPFEQPVIIGKPYILKLIHQVDDKIHGRSSGHYALVTQQPLRGRAKQGGQRVGEMEVWALEGFGVAHILQEMLTYKSDHIRARQEVLGTTIIGGTIPKPKDAPESFRLLVRELRSLSLELNHFLVSEKNFQINRKEA.

It belongs to the RNA polymerase beta chain family. As to quaternary structure, in plastids the minimal PEP RNA polymerase catalytic core is composed of four subunits: alpha, beta, beta', and beta''. When a (nuclear-encoded) sigma factor is associated with the core the holoenzyme is formed, which can initiate transcription.

It localises to the plastid. The protein resides in the chloroplast. It carries out the reaction RNA(n) + a ribonucleoside 5'-triphosphate = RNA(n+1) + diphosphate. Its function is as follows. DNA-dependent RNA polymerase catalyzes the transcription of DNA into RNA using the four ribonucleoside triphosphates as substrates. The chain is DNA-directed RNA polymerase subunit beta from Eucalyptus globulus subsp. globulus (Tasmanian blue gum).